The chain runs to 218 residues: Copper acquisition factor BIM1 (218 aa).

The first 19 residues, 1–19 (MFALKSILVTSLITSTALA), serve as a signal peptide directing secretion. Cu(2+) contacts are provided by His20 and His65. N-linked (GlcNAc...) asparagine glycosylation is found at Asn87, Asn91, and Asn124. Asp138 is a Cu(2+) binding site. 2 N-linked (GlcNAc...) asparagine glycosylation sites follow: Asn158 and Asn170. The interval 160 to 194 (TCTNDASKASNATSTSSGSATATSAAATSSSSGTS) is disordered. A compositionally biased stretch (low complexity) spans 165 to 194 (ASKASNATSTSSGSATATSAAATSSSSGTS). Ser190 carries the GPI-anchor amidated serine lipid modification. The propeptide at 191–218 (SGTSGAIKEVVGFGALSLALGIAGLIIL) is removed in mature form.

This sequence belongs to the X325 family. Interacts with the CUF1-dependent copper transporter CTR1. Requires Cu(2+) as cofactor.

Its subcellular location is the cell membrane. Functionally, lytic polysaccharide monooxygenase-like protein that has diverged to biological functions other than polysaccharide degradation since it does not perform oxidative cleavage of polysaccharides. Cell surface-bound protein that functions in the copper-accumulation pathway shared by the CUF1-dependent copper transporter CTR1. Involved in maintaining cell wall integrity during copper deficiency. Binds Cu(2+) with an estimated 1:1 stoichiometry and might serve as an extracellular copper ligand. FRE4 and FRE7 metalloreductases probably function together with CTR1 and BIM1 to liberate the Cu(2+) bound to the BIM1 copper-binding site for subsequent import of Cu(+) into the cell by CTR1, via the reduction of BIM1-bound Cu(2+) to Cu(+) to reduce binding affinity for BIM1 but increase affinity for CTR1. Facilitates copper acquisition in the brain of mammalian hosts and acts as a copper-dependent virulence trait in fungal meningitis. While BIM1 plays a critical role in cryptococcal meningitis, at least in part through its role in copper acquisition, it could play additional roles during copper limitation or as a means to invade and colonize host tissues in the brain, by compromising host carbohydrate integrity via its lytic polysaccharide monooxygenase (LPMO) activity, which has still to be determined. The polypeptide is Copper acquisition factor BIM1 (Cryptococcus neoformans var. grubii serotype A (strain H99 / ATCC 208821 / CBS 10515 / FGSC 9487) (Filobasidiella neoformans var. grubii)).